The chain runs to 348 residues: UDP-3-O-acylglucosamine N-acyltransferase (348 aa).

His-248 functions as the Proton acceptor in the catalytic mechanism.

Belongs to the transferase hexapeptide repeat family. LpxD subfamily. Homotrimer.

It carries out the reaction a UDP-3-O-[(3R)-3-hydroxyacyl]-alpha-D-glucosamine + a (3R)-hydroxyacyl-[ACP] = a UDP-2-N,3-O-bis[(3R)-3-hydroxyacyl]-alpha-D-glucosamine + holo-[ACP] + H(+). It functions in the pathway bacterial outer membrane biogenesis; LPS lipid A biosynthesis. Its function is as follows. Catalyzes the N-acylation of UDP-3-O-acylglucosamine using 3-hydroxyacyl-ACP as the acyl donor. Is involved in the biosynthesis of lipid A, a phosphorylated glycolipid that anchors the lipopolysaccharide to the outer membrane of the cell. The polypeptide is UDP-3-O-acylglucosamine N-acyltransferase (Rippkaea orientalis (strain PCC 8801 / RF-1) (Cyanothece sp. (strain PCC 8801))).